Here is a 271-residue protein sequence, read N- to C-terminus: Formamidopyrimidine-DNA glycosylase (271 aa).

Catalysis depends on Pro2, which acts as the Schiff-base intermediate with DNA. Glu3 serves as the catalytic Proton donor. Catalysis depends on Lys58, which acts as the Proton donor; for beta-elimination activity. Positions 110 and 152 each coordinate DNA. The FPG-type zinc-finger motif lies at 237–271; sequence AVYGQTGKPCTVCGTPIARIRLGNRSTWFCPVCQK. Arg261 (proton donor; for delta-elimination activity) is an active-site residue.

This sequence belongs to the FPG family. As to quaternary structure, monomer. The cofactor is Zn(2+).

The enzyme catalyses Hydrolysis of DNA containing ring-opened 7-methylguanine residues, releasing 2,6-diamino-4-hydroxy-5-(N-methyl)formamidopyrimidine.. It catalyses the reaction 2'-deoxyribonucleotide-(2'-deoxyribose 5'-phosphate)-2'-deoxyribonucleotide-DNA = a 3'-end 2'-deoxyribonucleotide-(2,3-dehydro-2,3-deoxyribose 5'-phosphate)-DNA + a 5'-end 5'-phospho-2'-deoxyribonucleoside-DNA + H(+). Functionally, involved in base excision repair of DNA damaged by oxidation or by mutagenic agents. Acts as a DNA glycosylase that recognizes and removes damaged bases. Has a preference for oxidized purines, such as 7,8-dihydro-8-oxoguanine (8-oxoG). Has AP (apurinic/apyrimidinic) lyase activity and introduces nicks in the DNA strand. Cleaves the DNA backbone by beta-delta elimination to generate a single-strand break at the site of the removed base with both 3'- and 5'-phosphates. This is Formamidopyrimidine-DNA glycosylase from Geobacter sulfurreducens (strain ATCC 51573 / DSM 12127 / PCA).